The chain runs to 169 residues: Small ribosomal subunit protein uS13c (169 aa).

The transit peptide at 1–47 (MAQMVAMPVAHSLSLICNWAKSNPLSRNTLALPASNTPNKQSLSIRC) directs the protein to the chloroplast.

Belongs to the universal ribosomal protein uS13 family. Part of the 30S ribosomal subunit.

The protein resides in the plastid. It is found in the chloroplast. Its function is as follows. Located at the top of the head of the 30S subunit, it contacts several helices of the 16S rRNA. The chain is Small ribosomal subunit protein uS13c (RPS13) from Arabidopsis thaliana (Mouse-ear cress).